A 343-amino-acid polypeptide reads, in one-letter code: Dual-specificity RNA methyltransferase RlmN (343 aa).

The Proton acceptor role is filled by glutamate 92. The Radical SAM core domain occupies 98–325; it reads DEDRTTLCIS…VITRSSRGSD (228 aa). A disulfide bridge links cysteine 105 with cysteine 330. Cysteine 112, cysteine 116, and cysteine 119 together coordinate [4Fe-4S] cluster. S-adenosyl-L-methionine contacts are provided by residues 157–158, serine 189, 211–213, and asparagine 287; these read GE and SLN. The active-site S-methylcysteine intermediate is the cysteine 330.

It belongs to the radical SAM superfamily. RlmN family. [4Fe-4S] cluster is required as a cofactor.

The protein resides in the cytoplasm. The catalysed reaction is adenosine(2503) in 23S rRNA + 2 reduced [2Fe-2S]-[ferredoxin] + 2 S-adenosyl-L-methionine = 2-methyladenosine(2503) in 23S rRNA + 5'-deoxyadenosine + L-methionine + 2 oxidized [2Fe-2S]-[ferredoxin] + S-adenosyl-L-homocysteine. The enzyme catalyses adenosine(37) in tRNA + 2 reduced [2Fe-2S]-[ferredoxin] + 2 S-adenosyl-L-methionine = 2-methyladenosine(37) in tRNA + 5'-deoxyadenosine + L-methionine + 2 oxidized [2Fe-2S]-[ferredoxin] + S-adenosyl-L-homocysteine. Its function is as follows. Specifically methylates position 2 of adenine 2503 in 23S rRNA and position 2 of adenine 37 in tRNAs. m2A2503 modification seems to play a crucial role in the proofreading step occurring at the peptidyl transferase center and thus would serve to optimize ribosomal fidelity. This chain is Dual-specificity RNA methyltransferase RlmN, found in Geotalea uraniireducens (strain Rf4) (Geobacter uraniireducens).